Here is a 412-residue protein sequence, read N- to C-terminus: Multifunctional CCA protein (412 aa).

2 residues coordinate ATP: G8 and R11. G8 and R11 together coordinate CTP. E21 and D23 together coordinate Mg(2+). 3 residues coordinate ATP: R91, R137, and R140. The CTP site is built by R91, R137, and R140. Positions 228-329 (CGIHTLMSLQ…WRLLQRLDVL (102 aa)) constitute an HD domain.

It belongs to the tRNA nucleotidyltransferase/poly(A) polymerase family. Bacterial CCA-adding enzyme type 1 subfamily. As to quaternary structure, monomer. Can also form homodimers and oligomers. The cofactor is Mg(2+). It depends on Ni(2+) as a cofactor.

It catalyses the reaction a tRNA precursor + 2 CTP + ATP = a tRNA with a 3' CCA end + 3 diphosphate. The catalysed reaction is a tRNA with a 3' CCA end + 2 CTP + ATP = a tRNA with a 3' CCACCA end + 3 diphosphate. Its function is as follows. Catalyzes the addition and repair of the essential 3'-terminal CCA sequence in tRNAs without using a nucleic acid template. Adds these three nucleotides in the order of C, C, and A to the tRNA nucleotide-73, using CTP and ATP as substrates and producing inorganic pyrophosphate. tRNA 3'-terminal CCA addition is required both for tRNA processing and repair. Also involved in tRNA surveillance by mediating tandem CCA addition to generate a CCACCA at the 3' terminus of unstable tRNAs. While stable tRNAs receive only 3'-terminal CCA, unstable tRNAs are marked with CCACCA and rapidly degraded. This Acinetobacter baumannii (strain AB307-0294) protein is Multifunctional CCA protein.